A 72-amino-acid polypeptide reads, in one-letter code: DNA-directed RNA polymerase subunit omega (72 aa).

This sequence belongs to the RNA polymerase subunit omega family. In terms of assembly, the RNAP catalytic core consists of 2 alpha, 1 beta, 1 beta' and 1 omega subunit. When a sigma factor is associated with the core the holoenzyme is formed, which can initiate transcription.

The enzyme catalyses RNA(n) + a ribonucleoside 5'-triphosphate = RNA(n+1) + diphosphate. Functionally, promotes RNA polymerase assembly. Latches the N- and C-terminal regions of the beta' subunit thereby facilitating its interaction with the beta and alpha subunits. This is DNA-directed RNA polymerase subunit omega from Campylobacter lari (strain RM2100 / D67 / ATCC BAA-1060).